Consider the following 146-residue polypeptide: Hemoglobin subunit beta-2 (146 aa).

Residues 2-146 form the Globin domain; it reads HWTAEEKQLV…VAHALAYHYH (145 aa). Heme b is bound by residues His-63 and His-92.

This sequence belongs to the globin family. In terms of assembly, there are three forms of hemoglobin in Sphenodon: A, A' and D. Hb A is a tetramer of two alpha-A and two beta-1, Hb A' is a tetramer of two alpha-a and two beta-2, Hb D is a tetramer of two alpha-D and two beta-2.

In terms of biological role, involved in oxygen transport from the lung to the various peripheral tissues. This chain is Hemoglobin subunit beta-2 (HBB2), found in Sphenodon punctatus (Tuatara).